We begin with the raw amino-acid sequence, 749 residues long: Tryptophan 2-monooxygenase (749 aa).

The FMN site is built by Ser232, Glu252, Lys260, and Arg280. Residue Arg280 participates in substrate binding.

It belongs to the tryptophan 2-monooxygenase family. FMN is required as a cofactor.

It catalyses the reaction L-tryptophan + O2 = indole-3-acetamide + CO2 + H2O. The protein operates within plant hormone metabolism; auxin biosynthesis. This Rhizobium rhizogenes (Agrobacterium rhizogenes) protein is Tryptophan 2-monooxygenase (aux1).